Here is a 330-residue protein sequence, read N- to C-terminus: Ribose operon repressor (330 aa).

The HTH lacI-type domain occupies 2 to 56 (ATMKDVARLAGVSTSTVSHVINKDRFVSEAITAKVEAAIKELNYAPSALARSLKL). Positions 4–23 (MKDVARLAGVSTSTVSHVIN) form a DNA-binding region, H-T-H motif.

Its function is as follows. Transcriptional repressor for the ribose rbsDACBK operon. RbsR binds to a region of perfect dyad symmetry spanning the rbs operon transcriptional start site. The affinity for the rbs operator is reduced by addition of ribose, consistent with ribose being the inducer of the operon. This Escherichia coli O6:H1 (strain CFT073 / ATCC 700928 / UPEC) protein is Ribose operon repressor (rbsR).